A 558-amino-acid polypeptide reads, in one-letter code: Glutamine--tRNA ligase (558 aa).

The short motif at 36–46 (PEPNGYLHLGH) is the 'HIGH' region element. ATP-binding positions include 37 to 39 (EPN) and 43 to 49 (HLGHAKS). L-glutamine is bound by residues aspartate 69 and tyrosine 214. ATP-binding positions include threonine 233, 263-264 (RL), and 271-273 (LSK). Residues 270–274 (LLSKR) carry the 'KMSKS' region motif.

It belongs to the class-I aminoacyl-tRNA synthetase family. In terms of assembly, monomer.

The protein resides in the cytoplasm. The catalysed reaction is tRNA(Gln) + L-glutamine + ATP = L-glutaminyl-tRNA(Gln) + AMP + diphosphate. The protein is Glutamine--tRNA ligase of Nitrobacter hamburgensis (strain DSM 10229 / NCIMB 13809 / X14).